The sequence spans 179 residues: Large ribosomal subunit protein uL6 (179 aa).

Belongs to the universal ribosomal protein uL6 family. Part of the 50S ribosomal subunit.

In terms of biological role, this protein binds to the 23S rRNA, and is important in its secondary structure. It is located near the subunit interface in the base of the L7/L12 stalk, and near the tRNA binding site of the peptidyltransferase center. This chain is Large ribosomal subunit protein uL6, found in Saccharopolyspora erythraea (strain ATCC 11635 / DSM 40517 / JCM 4748 / NBRC 13426 / NCIMB 8594 / NRRL 2338).